Reading from the N-terminus, the 269-residue chain is Spermatogenesis-associated serine-rich protein 1 (269 aa).

Basic and acidic residues predominate over residues 1–14 (MESSKDTQHGDALE). A disordered region spans residues 1–92 (MESSKDTQHG…SKVSLPEIPK (92 aa)). A compositionally biased stretch (polar residues) spans 18–38 (CLANRTSSRQNKRTSLSSSDG). At T54 the chain carries Phosphothreonine. The segment covering 67–86 (SSSSSSSSSSAQSNRSSKVS) has biased composition (low complexity). Phosphoserine is present on residues S72, S75, and S82.

The protein is Spermatogenesis-associated serine-rich protein 1 (Spats1) of Mus musculus (Mouse).